A 300-amino-acid chain; its full sequence is Cation-efflux pump FieF (300 aa).

The next 4 helical transmembrane spans lie at 12 to 32, 40 to 60, 82 to 102, and 114 to 134; these read AALA…VAWY, LAAL…LLVV, AALA…LTGF, and PGVG…LVTY. Asp45 and Asp49 together coordinate Zn(2+). The Zn(2+) site is built by His153 and Asp157. 2 helical membrane passes run 155–175 and 178–198; these read QSDV…WYGF and ADAL…LRMG.

Belongs to the cation diffusion facilitator (CDF) transporter (TC 2.A.4) family. FieF subfamily. In terms of assembly, homodimer.

The protein localises to the cell inner membrane. The enzyme catalyses Zn(2+)(in) + H(+)(out) = Zn(2+)(out) + H(+)(in). It catalyses the reaction Cd(2+)(in) + H(+)(out) = Cd(2+)(out) + H(+)(in). The catalysed reaction is Fe(2+)(in) + H(+)(out) = Fe(2+)(out) + H(+)(in). Its function is as follows. Divalent metal cation transporter which exports Zn(2+), Cd(2+) and possibly Fe(2+). May be involved in zinc and iron detoxification by efflux. The polypeptide is Cation-efflux pump FieF (Serratia proteamaculans (strain 568)).